The following is a 243-amino-acid chain: Precursor of CEP9 (243 aa).

The first 26 residues, 1 to 26 (MKLLSITLTSIVISMVFYQTPITTEA), serve as a signal peptide directing secretion. Residues 28–44 (SLRKTNDQDHFKAGFTD) constitute a propeptide that is removed on maturation. Disordered stretches follow at residues 42–63 (FTDDFVPTSPGNSPGVGHKKGN), 91–173 (KTGS…VKGF), and 189–243 (NGQD…EPKA). Pro-48 is subject to Hydroxyproline; partial. Position 51 is a hydroxyproline (Pro-51). A Hydroxyproline; partial modification is found at Pro-55. Positions 60–96 (KKGNVNVEGFQDDFKPTEGRKLLKTNVQDHFKTGSTD) are excised as a propeptide. Hydroxyproline is present on residues Pro-100, Pro-103, and Pro-107. Residues 112–148 (KKGNVNVESSEDDFKHKEGRKLQQTNGQNHFKTGSTD) constitute a propeptide that is removed on maturation. Over residues 133-147 (LQQTNGQNHFKTGST) the composition is skewed to polar residues. A hydroxyproline mark is found at Pro-152, Pro-155, and Pro-159. Residues 164-200 (KKGHANVKGFKDDFAPTEEIRLQKMNGQDHFKTGSTD) constitute a propeptide that is removed on maturation. A hydroxyproline mark is found at Pro-204, Pro-207, and Pro-211. A propeptide spanning residues 216-219 (KKGD) is cleaved from the precursor. Hydroxyproline is present on residues Pro-223, Pro-226, and Pro-230. Residues 235-243 (AVKNDEPKA) constitute a propeptide that is removed on maturation.

It belongs to the C-terminally encoded plant signaling peptide (CEP) family. Interacts with CEP receptors (e.g. CEPR1 and CEPR2). Hydroxylated peptide is more active than non-hydroxylated peptide. Post-translationally, the mature small signaling peptide is generated by proteolytic processing of the longer precursor. In terms of tissue distribution, expressed in lateral root primordia and in lateral roots excluding the meristem region. Also present in the aerial tissues, such as leaf petioles and the shoot apex region.

The protein resides in the secreted. It is found in the extracellular space. Its subcellular location is the apoplast. In terms of biological role, extracellular signaling peptide that represses primary root growth rate and significantly inhibits lateral root formation. Modulates leaf morphology. Regulates systemic nitrogen (N)-demand signaling. Mediates up-regulation of genes involved in N uptake and assimilation pathways. The sequence is that of Precursor of CEP9 from Arabidopsis thaliana (Mouse-ear cress).